The sequence spans 308 residues: Serine/threonine-protein phosphatase 4 catalytic subunit (308 aa).

Residues D51, H53, D79, and N111 each coordinate Mn(2+). H112 functions as the Proton donor in the catalytic mechanism. Mn(2+)-binding residues include H161 and H235. A Leucine methyl ester modification is found at L308.

This sequence belongs to the PPP phosphatase family. PP-4 (PP-X) subfamily. In terms of assembly, catalytic subunit of the histone H2A phosphatase complex (HTP-C) containing PPH3, PSY2 and PSY4. Requires Mn(2+) as cofactor.

The protein resides in the cytoplasm. The protein localises to the nucleus. It catalyses the reaction O-phospho-L-seryl-[protein] + H2O = L-seryl-[protein] + phosphate. It carries out the reaction O-phospho-L-threonyl-[protein] + H2O = L-threonyl-[protein] + phosphate. In terms of biological role, forms the histone H2A phosphatase complex in association with the regulatory subunits PSY2 and PSY4, which dephosphorylates H2AS128ph (gamma-H2A) that has been displaced from sites of DNA lesions in the double-stranded DNA break repair process. Dephosphorylation is necessary for efficient recovery from the DNA damage checkpoint. The sequence is that of Serine/threonine-protein phosphatase 4 catalytic subunit (PPH3) from Kluyveromyces lactis (strain ATCC 8585 / CBS 2359 / DSM 70799 / NBRC 1267 / NRRL Y-1140 / WM37) (Yeast).